Here is a 586-residue protein sequence, read N- to C-terminus: Chaperonin 60 subunit alpha 1, chloroplastic (586 aa).

Residues 1–46 constitute a chloroplast transit peptide; the sequence is MASANALSSASVLCSSRQSKLGGGNQQQGQRVSYNKRTIRRFSVRA. S90 carries the phosphoserine modification.

Belongs to the chaperonin (HSP60) family. As to quaternary structure, part of the Cpn60 complex composed of 7 alpha and 7 beta subunits. This complex shows ATPase activity. The Cpn60 complex interacts with the Cpn10 complex. As to expression, expressed in leaves, stems, siliques and flowers.

Its subcellular location is the plastid. The protein localises to the chloroplast. Its function is as follows. Binds RuBisCO small and large subunits and is implicated in the assembly of the enzyme oligomer. Involved in protein assisted folding. Required for proper chloroplast development. The chain is Chaperonin 60 subunit alpha 1, chloroplastic (CPN60A1) from Arabidopsis thaliana (Mouse-ear cress).